Consider the following 342-residue polypeptide: Ferrochelatase (342 aa).

His188 and Glu268 together coordinate Fe cation.

This sequence belongs to the ferrochelatase family.

It localises to the cytoplasm. It carries out the reaction heme b + 2 H(+) = protoporphyrin IX + Fe(2+). It functions in the pathway porphyrin-containing compound metabolism; protoheme biosynthesis; protoheme from protoporphyrin-IX: step 1/1. Functionally, catalyzes the ferrous insertion into protoporphyrin IX. The polypeptide is Ferrochelatase (Rickettsia conorii (strain ATCC VR-613 / Malish 7)).